A 261-amino-acid polypeptide reads, in one-letter code: Undecaprenyl-diphosphatase 2 (261 aa).

8 helical membrane-spanning segments follow: residues 1-21 (MLEALLLGVVEGLTEFLPISS), 38-58 (PGKTYEIVVQLGAILAVCVVF), 75-95 (FAFARNVMVAFLPAAVIGATL), 103-123 (LESPLVAAIALVVGGVAILVI), 138-158 (MSPALALGVGFCQVLAMVPGV), 178-198 (AAEFSFFLAIPTMCGASAYSL), 212-232 (LIALGFVAAFLSALVVVKGFI), and 240-260 (FAPFAWYRIAFGSLMAVLILM).

The protein belongs to the UppP family.

It is found in the cell inner membrane. It catalyses the reaction di-trans,octa-cis-undecaprenyl diphosphate + H2O = di-trans,octa-cis-undecaprenyl phosphate + phosphate + H(+). Functionally, catalyzes the dephosphorylation of undecaprenyl diphosphate (UPP). Confers resistance to bacitracin. This chain is Undecaprenyl-diphosphatase 2, found in Paramagnetospirillum magneticum (strain ATCC 700264 / AMB-1) (Magnetospirillum magneticum).